The primary structure comprises 264 residues: Thymidylate synthase (264 aa).

Arginine 21 contributes to the dUMP binding site. Histidine 51 lines the (6R)-5,10-methylene-5,6,7,8-tetrahydrofolate pocket. 126 to 127 (RR) lines the dUMP pocket. The Nucleophile role is filled by cysteine 146. DUMP is bound by residues 166–169 (RSAD), asparagine 177, and 207–209 (HLY). Aspartate 169 lines the (6R)-5,10-methylene-5,6,7,8-tetrahydrofolate pocket. Alanine 263 is a (6R)-5,10-methylene-5,6,7,8-tetrahydrofolate binding site.

This sequence belongs to the thymidylate synthase family. Bacterial-type ThyA subfamily. In terms of assembly, homodimer.

The protein resides in the cytoplasm. It carries out the reaction dUMP + (6R)-5,10-methylene-5,6,7,8-tetrahydrofolate = 7,8-dihydrofolate + dTMP. Its pathway is pyrimidine metabolism; dTTP biosynthesis. In terms of biological role, catalyzes the reductive methylation of 2'-deoxyuridine-5'-monophosphate (dUMP) to 2'-deoxythymidine-5'-monophosphate (dTMP) while utilizing 5,10-methylenetetrahydrofolate (mTHF) as the methyl donor and reductant in the reaction, yielding dihydrofolate (DHF) as a by-product. This enzymatic reaction provides an intracellular de novo source of dTMP, an essential precursor for DNA biosynthesis. The chain is Thymidylate synthase from Mesorhizobium japonicum (strain LMG 29417 / CECT 9101 / MAFF 303099) (Mesorhizobium loti (strain MAFF 303099)).